Consider the following 122-residue polypeptide: Large ribosomal subunit protein uL14 (122 aa).

The protein belongs to the universal ribosomal protein uL14 family. In terms of assembly, part of the 50S ribosomal subunit. Forms a cluster with proteins L3 and L19. In the 70S ribosome, L14 and L19 interact and together make contacts with the 16S rRNA in bridges B5 and B8.

Functionally, binds to 23S rRNA. Forms part of two intersubunit bridges in the 70S ribosome. The chain is Large ribosomal subunit protein uL14 from Aeromonas salmonicida (strain A449).